Reading from the N-terminus, the 332-residue chain is Ketol-acid reductoisomerase (NADP(+)) (332 aa).

In terms of domain architecture, KARI N-terminal Rossmann spans 2–182 (AKIYTDKDVS…GATRAGVIET (181 aa)). NADP(+) contacts are provided by residues 25-28 (YGSQ), Ser53, and 83-86 (DMIQ). His108 is an active-site residue. Residue Gly134 coordinates NADP(+). Residues 183–328 (TFKEETETDL…RSLRDIILRG (146 aa)) form the KARI C-terminal knotted domain. Mg(2+)-binding residues include Asp191, Glu195, Glu227, and Glu231. Residue Ser252 participates in substrate binding.

It belongs to the ketol-acid reductoisomerase family. Mg(2+) is required as a cofactor.

The catalysed reaction is (2R)-2,3-dihydroxy-3-methylbutanoate + NADP(+) = (2S)-2-acetolactate + NADPH + H(+). It carries out the reaction (2R,3R)-2,3-dihydroxy-3-methylpentanoate + NADP(+) = (S)-2-ethyl-2-hydroxy-3-oxobutanoate + NADPH + H(+). It functions in the pathway amino-acid biosynthesis; L-isoleucine biosynthesis; L-isoleucine from 2-oxobutanoate: step 2/4. Its pathway is amino-acid biosynthesis; L-valine biosynthesis; L-valine from pyruvate: step 2/4. In terms of biological role, involved in the biosynthesis of branched-chain amino acids (BCAA). Catalyzes an alkyl-migration followed by a ketol-acid reduction of (S)-2-acetolactate (S2AL) to yield (R)-2,3-dihydroxy-isovalerate. In the isomerase reaction, S2AL is rearranged via a Mg-dependent methyl migration to produce 3-hydroxy-3-methyl-2-ketobutyrate (HMKB). In the reductase reaction, this 2-ketoacid undergoes a metal-dependent reduction by NADPH to yield (R)-2,3-dihydroxy-isovalerate. This chain is Ketol-acid reductoisomerase (NADP(+)), found in Sulfolobus acidocaldarius (strain ATCC 33909 / DSM 639 / JCM 8929 / NBRC 15157 / NCIMB 11770).